We begin with the raw amino-acid sequence, 43 residues long: Protein PsbN (43 aa).

The helical transmembrane segment at 5–27 threads the bilayer; it reads TLVAIFISCLLVSFTGYAPYTAS.

Belongs to the PsbN family.

The protein localises to the plastid. Its subcellular location is the chloroplast thylakoid membrane. May play a role in photosystem I and II biogenesis. This chain is Protein PsbN, found in Anthoceros angustus (Hornwort).